A 647-amino-acid polypeptide reads, in one-letter code: MPRIPTVELSRYLLTGHIASPGCLRARAALPGKNTRVALGGAPLPSRQLQPRQHARYLTTETSFANPSATTSSPAAAAPFRKQLKEQAKALKKSGHKKKKSSDNQTVPGWELTVGIEIHAQLNTAHKLFSPATTSFNDPPNTHVAPFDLALPGSQPLFQPATLIPAVRAALALNCSIQPVSRFDRKHYFHWDQPSGYQITQFYEPFAKDGFITLYARDGIAAEDGEEIKVGIKQVQMEQDTAKTTAQPGDVQWLDFNRVGVPLIEIITLPEIHHPATAAALVRKVQMVLASVDACVSGLEEGGLRADVNVSVRRTDDPSGKLGTRTEIKNLSSFKAVEDAIIAERDRQIELLEEGGEVKGETRGWSLGSTETRRLRGKEGEVDYRYMPDPDLGPVVIGEDLVARLRETMGVLPDQEADQLMERYNLSAKDALSLMLLDGGARIQYFYNVLDSLEERLVADGQAVPEGAEHATLAANWCLHELGKLTDSASSSSCSDPDVLEGLAMTPLGESPLVPSSSLAAILHHLYSRTITAKVAKDLLWAVYRGEIPEGGTTSYIDTHGLWFKELPEEEYAKLADEVIQGEEKILGEFLRWKQGKMKAYPQGKLMFLVGKMMRGGPEGRVEASGAERVLRRRIEEVYLPELEKGE.

Residues 87–106 (QAKALKKSGHKKKKSSDNQT) form a disordered region. A compositionally biased stretch (basic residues) spans 90 to 100 (ALKKSGHKKKK).

This sequence belongs to the GatB/GatE family. GatB subfamily. As to quaternary structure, subunit of the heterotrimeric GatCAB amidotransferase (AdT) complex, composed of A, B and C subunits.

It is found in the mitochondrion. The catalysed reaction is L-glutamyl-tRNA(Gln) + L-glutamine + ATP + H2O = L-glutaminyl-tRNA(Gln) + L-glutamate + ADP + phosphate + H(+). Functionally, allows the formation of correctly charged Gln-tRNA(Gln) through the transamidation of misacylated Glu-tRNA(Gln) in the mitochondria. The reaction takes place in the presence of glutamine and ATP through an activated gamma-phospho-Glu-tRNA(Gln). This is Glutamyl-tRNA(Gln) amidotransferase subunit B, mitochondrial from Neurospora crassa (strain ATCC 24698 / 74-OR23-1A / CBS 708.71 / DSM 1257 / FGSC 987).